The following is a 581-amino-acid chain: Netrin-3 (581 aa).

An N-terminal signal peptide occupies residues 1-15 (LRLLLTTSVLRLARA). A Laminin N-terminal domain is found at 35–261 (APRRCIPEFV…SVGELQVGGR (227 aa)). N-linked (GlcNAc...) asparagine glycosylation is found at N88 and N103. 15 disulfides stabilise this stretch: C91/C124, C262/C271, C264/C281, C283/C292, C295/C315, C318/C327, C320/C345, C348/C357, C360/C378, C381/C393, C383/C400, C402/C411, C414/C428, C449/C521, and C468/C578. 3 consecutive Laminin EGF-like domains span residues 262 to 317 (CKCN…ECLA), 318 to 380 (CNCN…ACKA), and 381 to 430 (CDCH…PCIK). N394 carries N-linked (GlcNAc...) asparagine glycosylation. The NTR domain occupies 449 to 578 (CDSYCKPAKG…LQRREKKGKC (130 aa)). A Cell attachment site motif is present at residues 507–509 (RGD). N-linked (GlcNAc...) asparagine glycosylation is present at N540.

It localises to the secreted. The protein resides in the extracellular space. Its subcellular location is the extracellular matrix. Its function is as follows. Netrins control guidance of CNS commissural axons and peripheral motor axons. The protein is Netrin-3 (NTN3) of Gallus gallus (Chicken).